A 504-amino-acid chain; its full sequence is L-carnitine/gamma-butyrobetaine antiporter (504 aa).

12 consecutive transmembrane segments (helical) span residues 10–30 (IEPK…WLTV), 51–71 (WGWA…WLVF), 92–112 (IFMM…SIEI), 143–163 (GPLP…FFFV), 195–215 (FYLV…TPLV), 231–251 (LDAI…ACGL), 263–283 (SYLS…SFIM), 316–336 (WTVF…IFLA), 347–367 (LCFG…TVLG), 398–418 (WAAL…CFIA), 446–466 (LLVR…LLAL), and 475–495 (AIIA…LSFI).

The protein belongs to the BCCT transporter (TC 2.A.15) family. CaiT subfamily. Homotrimer.

The protein resides in the cell inner membrane. The catalysed reaction is 4-(trimethylamino)butanoate(in) + (R)-carnitine(out) = 4-(trimethylamino)butanoate(out) + (R)-carnitine(in). It participates in amine and polyamine metabolism; carnitine metabolism. Its function is as follows. Catalyzes the exchange of L-carnitine for gamma-butyrobetaine. This Escherichia coli O157:H7 protein is L-carnitine/gamma-butyrobetaine antiporter.